A 94-amino-acid chain; its full sequence is Large ribosomal subunit protein bL27 (94 aa).

A propeptide spanning residues 1-9 is cleaved from the precursor; that stretch reads MLKLNLQFF.

It belongs to the bacterial ribosomal protein bL27 family. Post-translationally, the N-terminus is cleaved by ribosomal processing cysteine protease Prp.

In Staphylococcus haemolyticus (strain JCSC1435), this protein is Large ribosomal subunit protein bL27.